Reading from the N-terminus, the 147-residue chain is Small ribosomal subunit protein bS6m (147 aa).

This sequence belongs to the bacterial ribosomal protein bS6 family. Component of the mitochondrial ribosome small subunit (28S) which comprises a 12S rRNA and about 30 distinct proteins.

It is found in the mitochondrion. This chain is Small ribosomal subunit protein bS6m (mRpS6), found in Drosophila melanogaster (Fruit fly).